Reading from the N-terminus, the 217-residue chain is MILILLGPPGIGKGTQASVLSDILKINHIATGDIFRKNFKENTELGILIKKIIAQGLLVPDDITNQMIADYLSKDIATKDFLLDGFPRNVLQARFLDDFFKNSHLFLTKVIYFNAGTQDLMKRIVGRRICPECGKVYHIENIPPKTPGICDKDQKTLIQREDDKPETFLKRLKVFNQETLPLVQYYREQNQLFEVDGMQNIDQVTKMILEVLETDRK.

Residue 10–15 (GIGKGT) participates in ATP binding. An NMP region spans residues 30-59 (ATGDIFRKNFKENTELGILIKKIIAQGLLV). Residues Thr-31, Arg-36, 57–59 (LLV), 85–88 (GFPR), and Gln-92 each bind AMP. Residues 126–163 (GRRICPECGKVYHIENIPPKTPGICDKDQKTLIQREDD) form an LID region. Residue Arg-127 participates in ATP binding. Residues Cys-130 and Cys-133 each coordinate Zn(2+). Residue 136-137 (VY) coordinates ATP. The Zn(2+) site is built by Cys-150 and Asp-153. Residues Arg-160 and Arg-171 each coordinate AMP. Residue Gln-199 participates in ATP binding.

The protein belongs to the adenylate kinase family. In terms of assembly, monomer.

The protein localises to the cytoplasm. It catalyses the reaction AMP + ATP = 2 ADP. It participates in purine metabolism; AMP biosynthesis via salvage pathway; AMP from ADP: step 1/1. Its function is as follows. Catalyzes the reversible transfer of the terminal phosphate group between ATP and AMP. Plays an important role in cellular energy homeostasis and in adenine nucleotide metabolism. This chain is Adenylate kinase, found in Onion yellows phytoplasma (strain OY-M).